A 1476-amino-acid polypeptide reads, in one-letter code: SH3 and multiple ankyrin repeat domains protein 2 (1476 aa).

The span at 66-76 (LSPQLLQQTPS) shows a compositional bias: polar residues. Positions 66-134 (LSPQLLQQTP…GANKDSLSTF (69 aa)) are disordered. Positions 147-206 (VPGRLFVAVKPYQPQVDGEIPLHRGDRVKVLSIGEGGFWEGSARGHIGWFPAECVEEVQC) constitute an SH3 domain. Val-162 is modified (phosphoserine). The region spanning 247–341 (TVVLQKKDNE…HLILKVVTVT (95 aa)) is the PDZ domain. Ser-372 is subject to Phosphoserine. Positions 391–412 (RKKKDKPEEIVPASKPSRTAEN) are disordered. Ser-456 carries the post-translational modification Phosphoserine. Thr-485 is subject to Phosphothreonine. A disordered region spans residues 503-533 (LSMPDTSEDIPPPPQSVPPSPPPPSPTTYNC). A compositionally biased stretch (pro residues) spans 512–528 (IPPPPQSVPPSPPPPSP). Ser-586 is modified (phosphoserine). 3 disordered regions span residues 659–916 (TIIV…KDRR), 946–983 (VPMAGPPLEEEEDREDGDTKPDHSPSTVPEGVPKTEGA), and 1057–1153 (PALA…ESMD). Residues 666–678 (STSSSGKSSQGSS) are compositionally biased toward low complexity. The span at 711-722 (VRDREKRLEARR) shows a compositional bias: basic and acidic residues. Ser-724 carries the post-translational modification Phosphoserine. The segment covering 783–795 (LGGGEAGAQGEAG) has biased composition (gly residues). A compositionally biased stretch (low complexity) spans 833-846 (RLLDPSSPLALALS). Composition is skewed to basic and acidic residues over residues 847–868 (ARDRAMQESQQGHKGEAPKADL) and 899–916 (RRQETENKYETDLGKDRR). The residue at position 903 (Thr-903) is a Phosphothreonine. A compositionally biased stretch (polar residues) spans 1070–1085 (TSQPPTLNSSQPANST). Residues 1119 to 1130 (VDSRSSSDHHLE) show a composition bias toward basic and acidic residues. A compositionally biased stretch (low complexity) spans 1131–1151 (TTSTISTVSSISTLSSEGGES). An SH3-binding motif is present at residues 1169-1175 (PPVPPKP). Disordered regions lie at residues 1195-1216 (EDTDGFVIPPPAPPPPPGSAQA) and 1260-1403 (NRGK…ISNK). Pro residues predominate over residues 1202–1212 (IPPPAPPPPPG). Residues 1291 to 1305 (STVSGTRSTTVTFTV) show a composition bias toward low complexity. Thr-1292 is a glycosylation site (O-linked (GlcNAc) threonine). A compositionally biased stretch (polar residues) spans 1307–1317 (PGTSQPITLQS). Phosphoserine occurs at positions 1334 and 1338. The segment covering 1364 to 1375 (LSDVFSLPSQSP) has biased composition (polar residues). A compositionally biased stretch (low complexity) spans 1387-1401 (RSRSPSPSILQQPIS). Positions 1413-1476 (WTKPDVADWL…ERALKQLLDR (64 aa)) constitute an SAM domain.

The protein belongs to the SHANK family. In terms of assembly, is part of a complex with DLG4/PSD-95 and DLGAP1/GKAP. Interacts with CTTN/cortactin SH3 domain, DLGAP1/GKAP and alpha-latrotoxin receptor 1. Interacts with DNM2, DBNL, GRID2, BAIAP2, SLC9A3, PLCB3 and CFTR. Interacts (via proline-rich region) with PDE4D. Interacts with ABI1 (via SH3 domain). As to expression, detected in brain (at protein level), where it is highly expressed in Purkinje cells.

The protein localises to the apical cell membrane. It is found in the cytoplasm. The protein resides in the synapse. It localises to the postsynaptic density. Its subcellular location is the cell projection. The protein localises to the dendritic spine. It is found in the growth cone. Functionally, seems to be an adapter protein in the postsynaptic density (PSD) of excitatory synapses that interconnects receptors of the postsynaptic membrane including NMDA-type and metabotropic glutamate receptors, and the actin-based cytoskeleton. May play a role in the structural and functional organization of the dendritic spine and synaptic junction. This is SH3 and multiple ankyrin repeat domains protein 2 (Shank2) from Mus musculus (Mouse).